A 48-amino-acid chain; its full sequence is Protein TUNAR (48 aa).

Residues 1–20 (MVITSGNDEDRGGQEKESKE) are disordered. Positions 8–20 (DEDRGGQEKESKE) are enriched in basic and acidic residues. The chain crosses the membrane as a helical span at residues 24–44 (LAMLGIIGTILNLIVIIFVYI).

In terms of assembly, interacts with ATPase ATP2A2/SERCA2. Interacts with ATPase ATP2A3/SERCA3; the interaction occurs at low levels in low glucose conditions and is increased by high glucose levels. In terms of tissue distribution, in the adult, expressed in Purkinje cells in the cerebellum, in motor neurons and interneurons in the spinal cord and in neurons of the cortex, hippocampus and thalamus (at protein level). Also detected in the developing cortex, hippocampus and thalamus at embryonic day E15.5 (at protein level).

The protein resides in the endoplasmic reticulum membrane. It is found in the extracellular vesicle membrane. In neurons, plays a role in the regulation of intracellular Ca(2+), possibly by acting as an activator of ATP2A2/SERCA2, thus increasing the efficiency with which Ca(2+) is removed from the cytoplasm. Inhibits differentiation of embryonic stem cells into neurons and inhibits neurite outgrowth, likely as a result of its role in intracellular Ca(2+) regulation. In pancreatic beta cells, lowers Ca(2+) levels in the endoplasmic reticulum and enhances glucose-stimulated insulin secretion. This chain is Protein TUNAR, found in Mus musculus (Mouse).